Reading from the N-terminus, the 415-residue chain is Packaging protein 3 (415 aa).

The tract at residues 1–55 (MHPVLRQMRPPPQQRQEQEQRQTCRAPSPPPTASGGATSAVDAAADGDYEPPRRR) is disordered. The segment at 1 to 173 (MHPVLRQMRP…VNQEINFQKS (173 aa)) is interaction with packaging protein 1. 2 positions are modified to phosphoserine; by host: Ser75 and Ser360. A compositionally biased stretch (low complexity) spans 381–394 (GAGPGLAVAPARAG). Residues 381 to 415 (GAGPGLAVAPARAGNVGGVEEYDEDDEYEPEDGEY) are disordered. A compositionally biased stretch (acidic residues) spans 400–415 (EEYDEDDEYEPEDGEY).

It belongs to the adenoviridae packaging protein 3 family. In terms of assembly, part of the genome packaging complex composed of packaging proteins 1, 2 and 3; this complex specifically binds to the packaging sequence on the left end of viral genomic DNA and performs packaging of the viral genome. Interacts with hexon-linking protein IIIa; this interaction is required to promote correct genome packaging. In terms of processing, cleaved at different sites by the viral protease during virion maturation.

It localises to the host nucleus. Functionally, involved in viral genome packaging through its interaction with packaging proteins 1 and 2. After proteolytic cleavage by adenovirus protease, L1 52/55k protein is removed from the capsid during viral maturation. The polypeptide is Packaging protein 3 (Homo sapiens (Human)).